The chain runs to 161 residues: DNA-binding protein inhibitor ID-4 (161 aa).

Positions A52–L104 constitute a bHLH domain.

Heterodimer with other HLH proteins.

The protein resides in the nucleus. In terms of biological role, transcriptional regulator (lacking a basic DNA binding domain) which negatively regulates the basic helix-loop-helix (bHLH) transcription factors by forming heterodimers and inhibiting their DNA binding and transcriptional activity. Implicated in regulating a variety of cellular processes, including cellular growth, senescence, differentiation, apoptosis, angiogenesis, and neoplastic transformation. This Mus musculus (Mouse) protein is DNA-binding protein inhibitor ID-4 (Id4).